We begin with the raw amino-acid sequence, 459 residues long: uncharacterized protein (459 aa).

In terms of domain architecture, B12-binding spans 13 to 145 (TESAIKRVVG…DALSKGRELK (133 aa)). Positions 188-402 (ADGVPFGVVM…MNWRKYTTID (215 aa)) constitute a Radical SAM core domain. Positions 202, 206, and 209 each coordinate [4Fe-4S] cluster.

The protein belongs to the methyltransferase superfamily. It depends on [4Fe-4S] cluster as a cofactor.

This is an uncharacterized protein from Pyrococcus horikoshii (strain ATCC 700860 / DSM 12428 / JCM 9974 / NBRC 100139 / OT-3).